We begin with the raw amino-acid sequence, 378 residues long: uncharacterized protein (378 aa).

This is an uncharacterized protein from Orgyia pseudotsugata multicapsid polyhedrosis virus (OpMNPV).